The chain runs to 65 residues: Ferredoxin-like protein in vnf region (65 aa).

4Fe-4S ferredoxin-type domains are found at residues A2–D30 and Y32–D65. [4Fe-4S] cluster-binding residues include C10, C13, C16, C20, C39, C42, C50, and C54.

[4Fe-4S] cluster is required as a cofactor.

The polypeptide is Ferredoxin-like protein in vnf region (Azotobacter vinelandii).